Reading from the N-terminus, the 181-residue chain is 3-isopropylmalate dehydratase small subunit (181 aa).

This sequence belongs to the LeuD family. LeuD type 2 subfamily. Heterodimer of LeuC and LeuD.

The enzyme catalyses (2R,3S)-3-isopropylmalate = (2S)-2-isopropylmalate. It participates in amino-acid biosynthesis; L-leucine biosynthesis; L-leucine from 3-methyl-2-oxobutanoate: step 2/4. Its function is as follows. Catalyzes the isomerization between 2-isopropylmalate and 3-isopropylmalate, via the formation of 2-isopropylmaleate. The polypeptide is 3-isopropylmalate dehydratase small subunit (Deinococcus deserti (strain DSM 17065 / CIP 109153 / LMG 22923 / VCD115)).